The sequence spans 185 residues: Threonylcarbamoyl-AMP synthase (185 aa).

A YrdC-like domain is found at 4 to 185; it reads SFRVQQAARE…LATGEVVRPG (182 aa).

Belongs to the SUA5 family. TsaC subfamily.

The protein resides in the cytoplasm. It carries out the reaction L-threonine + hydrogencarbonate + ATP = L-threonylcarbamoyladenylate + diphosphate + H2O. Required for the formation of a threonylcarbamoyl group on adenosine at position 37 (t(6)A37) in tRNAs that read codons beginning with adenine. Catalyzes the conversion of L-threonine, HCO(3)(-)/CO(2) and ATP to give threonylcarbamoyl-AMP (TC-AMP) as the acyladenylate intermediate, with the release of diphosphate. This chain is Threonylcarbamoyl-AMP synthase, found in Pseudomonas putida (strain GB-1).